Consider the following 1044-residue polypeptide: Elongation factor 3A (1044 aa).

Residue Ser-2 is modified to N-acetylserine. The HEAT 1 repeat unit spans residues 5-42 (QQSIKVLEELFQKLSVATADNRHEIASEVASFLNGNII). Positions 42, 44, and 83 each coordinate ADP. HEAT repeat units follow at residues 86 to 123 (PYIV…AVNP), 125 to 162 (AIKA…AAKD), 166 to 203 (LRMP…TVDN), 205 to 241 (DIER…EVTP), 242 to 279 (ATLS…LVED), and 285 to 323 (PFLG…VGNV). Residues Lys-187 and Lys-196 each carry the N6,N6,N6-trimethyllysine modification. Lys-350 is covalently cross-linked (Glycyl lysine isopeptide (Lys-Gly) (interchain with G-Cter in ubiquitin)). Thr-392, His-396, and Glu-397 together coordinate ADP. One can recognise an ABC transporter 1 domain in the interval 426 to 641 (DEGEDLCNCE…CPAAKAYEEL (216 aa)). Lys-636 participates in a covalent cross-link: Glycyl lysine isopeptide (Lys-Gly) (interchain with G-Cter in ubiquitin). Residue Ser-642 is modified to Phosphoserine. One can recognise an ABC transporter 2 domain in the interval 667–993 (VKVTNMEFQY…AGPRIEKKED (327 aa)). Residue Asn-703 coordinates ADP. Lys-789 carries the post-translational modification N6,N6,N6-trimethyllysine. 3 residues coordinate ADP: Glu-922, Asn-925, and His-951. Thr-972 is subject to Phosphothreonine. Ser-974 is subject to Phosphoserine. A disordered region spans residues 974–1044 (SGHNWVSGQG…DAYVSSDEEF (71 aa)). Over residues 1007-1031 (GGKKKKKLSSAELRKKKKERMKKKK) the composition is skewed to basic residues. A phosphoserine mark is found at Ser-1039 and Ser-1040.

The protein belongs to the ABC transporter superfamily. ABCF family. EF3 subfamily. As to quaternary structure, monomer. Interacts with elongation factor 1A (eEF1A). Interacts through its N-terminus with 18S rRNA. Associates with ribosomes; preferentially binds ribosomes in the post-translocational state (bearing a peptidyl-tRNA in the P-site) in the presence of ATP, suggesting that ATP hydrolysis is required for ribosome dissociation.

The protein resides in the cytoplasm. It localises to the cytosol. The catalysed reaction is ATP + H2O = ADP + phosphate + H(+). It functions in the pathway protein biosynthesis; polypeptide chain elongation. Inhibited by the translational inhibitors neomycin and alpha-sarcin, which suppress the ATPase activity. Its function is as follows. Ribosome-dependent ATPase that functions in cytoplasmic translation elongation. Required for the ATP-dependent release of deacylated tRNA from the ribosomal E-site during protein biosynthesis. Stimulates the eEF1A-dependent binding of aminoacyl-tRNA to the ribosomal A-site, which has reduced affinity for tRNA as long as the E-site is occupied. Assists translation termination by stimulating the release of nascent protein from the ribosome by release factors. In nutrient-replete conditions, occupies the space on the ribosome bound by GCN1 during amino acid starvation conditions, and therefore indirectly negatively regulates GCN2 kinase activity in replete conditions. In Saccharomyces cerevisiae (strain ATCC 204508 / S288c) (Baker's yeast), this protein is Elongation factor 3A (YEF3).